Here is a 119-residue protein sequence, read N- to C-terminus: Large ribosomal subunit protein uL24 (119 aa).

It belongs to the universal ribosomal protein uL24 family. As to quaternary structure, part of the 50S ribosomal subunit.

Its function is as follows. One of two assembly initiator proteins, it binds directly to the 5'-end of the 23S rRNA, where it nucleates assembly of the 50S subunit. In terms of biological role, located at the polypeptide exit tunnel on the outside of the subunit. The sequence is that of Large ribosomal subunit protein uL24 from Methanosarcina acetivorans (strain ATCC 35395 / DSM 2834 / JCM 12185 / C2A).